Here is a 56-residue protein sequence, read N- to C-terminus: MANAVRIKIGLKCQESGDINYTTWKNPKTHTEKFEVKKYCPRLKKHTTHKEVKLKS.

It belongs to the bacterial ribosomal protein bL33 family.

In Aliarcobacter butzleri (strain RM4018) (Arcobacter butzleri), this protein is Large ribosomal subunit protein bL33.